A 537-amino-acid chain; its full sequence is Cytochrome P450 monooxygenase claR (537 aa).

A helical membrane pass occupies residues 23-43 (VVTITEVALGIITLYLLGSYI). Heme is bound at residue Cys454.

The protein belongs to the cytochrome P450 family. Heme serves as cofactor.

The protein resides in the membrane. It catalyses the reaction (2E)-geranylhydroquinone + reduced [NADPH--hemoprotein reductase] + O2 = wigandol + oxidized [NADPH--hemoprotein reductase] + 2 H2O + H(+). The protein operates within secondary metabolite biosynthesis; terpenoid biosynthesis. Functionally, cytochrome P450 monooxygenase; part of the gene cluster that mediates the biosynthesis of clavilactone A, a meroterpenoid that features a unique benzo-fused ten-membered carbocyclic ring unit with an alpha,beta-epoxy-gamma-lactone moiety, forming an intriguing 10/5/3 tricyclic nested skeleton. ClaR, ClaS and ClaT are sufficient to produce clavilactone A. ClaR acts as a macrocyclase to catalyze the oxidative cyclization of the isopentenyl to the nonterpenoid moieties to form the benzo-fused macrocycle, leading to wigantol. The biosynthesis begins with the prenyltransferase claS that transfers geranyl pyrophosphate (GPP) to hydroquinone to produces geranylhydroquinone. The cytochrome P450 monooxygenase claR then catalyzes the diradical coupling reaction between the intramolecular hydroquinone and allyl moieties to form the benzo-fused ten-membered carbocyclic ring unit of wigantol. Finally the cytochrome P450 monooxygenase claT exquisitely and stereoselectively assembles the alpha,beta-epoxy-gamma-lactone moiety, producing clavilactone A via arnebinol A. The protein is Cytochrome P450 monooxygenase claR of Ampulloclitocybe clavipes (Club foot).